The chain runs to 533 residues: Tyrosinase (533 aa).

The signal sequence occupies residues 1 to 18 (MFLAVLYCLLWSFQISDG). Over 19–476 (HFPRACASSK…YLEQASRIWP (458 aa)) the chain is Lumenal, melanosome. N-linked (GlcNAc...) asparagine glycosylation is found at Asn86, Asn111, and Asn161. 3 residues coordinate Cu cation: His180, His202, and His211. N-linked (GlcNAc...) asparagine glycosylation is found at Asn230 and Asn337. 2 residues coordinate Cu cation: His363 and His367. N-linked (GlcNAc...) asparagine glycosylation is present at Asn371. His390 contributes to the Cu cation binding site. A helical transmembrane segment spans residues 477–497 (WLLGAALVGAVIAAALSGLSS). At 498-533 (RLCLQKKKKKKQPQEERQPLLMDKDDYHSLLYQSHL) the chain is on the cytoplasmic side.

This sequence belongs to the tyrosinase family. In terms of assembly, forms an OPN3-dependent complex with DCT in response to blue light in melanocytes. It depends on Cu(2+) as a cofactor. In terms of processing, glycosylated. In terms of tissue distribution, expressed in the skin.

The protein localises to the melanosome membrane. It localises to the melanosome. It catalyses the reaction 2 L-dopa + O2 = 2 L-dopaquinone + 2 H2O. The catalysed reaction is L-tyrosine + O2 = L-dopaquinone + H2O. The enzyme catalyses 2 5,6-dihydroxyindole-2-carboxylate + O2 = 2 indole-5,6-quinone-2-carboxylate + 2 H2O. This is a copper-containing oxidase that functions in the formation of pigments such as melanins and other polyphenolic compounds. Catalyzes the initial and rate limiting step in the cascade of reactions leading to melanin production from tyrosine. In addition to hydroxylating tyrosine to DOPA (3,4-dihydroxyphenylalanine), also catalyzes the oxidation of DOPA to DOPA-quinone, and possibly the oxidation of DHI (5,6-dihydroxyindole) to indole-5,6 quinone. This is Tyrosinase (Tyr) from Mus musculus (Mouse).